The chain runs to 416 residues: Casein kinase I isoform epsilon (416 aa).

In terms of domain architecture, Protein kinase spans 9–277; sequence YRLGRKIGSG…YLRQLFRNLF (269 aa). Residues 15 to 23 and Lys-38 contribute to the ATP site; that span reads IGSGSFGDI. The Proton acceptor role is filled by Asp-128. Residues 301–318 show a composition bias toward basic and acidic residues; it reads PEDVDRERREHEREERMG. The segment at 301–416 is disordered; it reads PEDVDRERRE…TSVPFDHLGK (116 aa). Ser-343 and Ser-354 each carry phosphoserine. A compositionally biased stretch (polar residues) spans 351–365; the sequence is TPASRIQQTGNTSPR. Thr-362 carries the post-translational modification Phosphothreonine. Phosphoserine is present on Ser-363. Arg-382 carries the omega-N-methylarginine modification. A phosphoserine mark is found at Ser-389, Ser-405, and Ser-408.

It belongs to the protein kinase superfamily. CK1 Ser/Thr protein kinase family. Casein kinase I subfamily. Monomer. Component of the circadian core oscillator, which includes the CRY proteins, CLOCK, or NPAS2, ARTNL/BMAL1 or ARTNL2/BMAL2, CSNK1D and/or CSNK1E, TIMELESS and the PER proteins. Interacts with ANKRD6. Interacts with PER1. Interacts with DBNDD2, LRP5, LRP6 and SOCS3. Interacts with SNAI1 (via zinc fingers). Interacts with DDX3X; this interaction greatly enhances CSNK1E affinity for ATP and DVL2 phosphorylation, but inhibits DDX3X ATPase/helicase activity. In the presence of RNA, the interaction is decreased. Interacts with FAM83A, FAM83B, FAM83E and FAM83H (via DUF1669). Autophosphorylated. Partially dephosphorylated by PPP5C. May be dephosphorylated by PP1. In terms of tissue distribution, expressed in all tissues examined, including brain, heart, lung, liver, pancreas, kidney, placenta and skeletal muscle. Expressed in monocytes and lymphocytes but not in granulocytes.

It is found in the cytoplasm. Its subcellular location is the nucleus. It carries out the reaction L-seryl-[protein] + ATP = O-phospho-L-seryl-[protein] + ADP + H(+). The catalysed reaction is L-threonyl-[protein] + ATP = O-phospho-L-threonyl-[protein] + ADP + H(+). With respect to regulation, phosphorylation leads to a decrease in the catalytic activity. Its function is as follows. Casein kinases are operationally defined by their preferential utilization of acidic proteins such as caseins as substrates. Participates in Wnt signaling. Phosphorylates DVL1. Phosphorylates DVL2. Phosphorylates NEDD9/HEF1. Central component of the circadian clock. In balance with PP1, determines the circadian period length, through the regulation of the speed and rhythmicity of PER1 and PER2 phosphorylation. Controls PER1 and PER2 nuclear transport and degradation. Inhibits cytokine-induced granuloytic differentiation. This chain is Casein kinase I isoform epsilon (Csnk1e), found in Mus musculus (Mouse).